A 165-amino-acid polypeptide reads, in one-letter code: Putative pre-16S rRNA nuclease (165 aa).

Belongs to the YqgF nuclease family.

It localises to the cytoplasm. Could be a nuclease involved in processing of the 5'-end of pre-16S rRNA. The chain is Putative pre-16S rRNA nuclease from Brucella anthropi (strain ATCC 49188 / DSM 6882 / CCUG 24695 / JCM 21032 / LMG 3331 / NBRC 15819 / NCTC 12168 / Alc 37) (Ochrobactrum anthropi).